The primary structure comprises 86 residues: BolA-like protein 2 (86 aa).

N-acetylmethionine is present on M1.

This sequence belongs to the BolA/IbaG family. In terms of assembly, interacts with GLRX3; forms a heterotrimeric complex composed by two BOLA2 molecules and one GLRX3 molecule; linked by [2Fe-2S] clusters.

It localises to the cytoplasm. The protein localises to the nucleus. Its function is as follows. Acts as a cytosolic iron-sulfur (Fe-S) cluster assembly factor that facilitates [2Fe-2S] cluster insertion into a subset of cytosolic proteins. Acts together with the monothiol glutaredoxin GLRX3. The polypeptide is BolA-like protein 2 (BOLA2) (Homo sapiens (Human)).